We begin with the raw amino-acid sequence, 249 residues long: DNA repair protein RecO (249 aa).

This sequence belongs to the RecO family.

In terms of biological role, involved in DNA repair and RecF pathway recombination. This Rhodopseudomonas palustris (strain BisB5) protein is DNA repair protein RecO.